The following is a 376-amino-acid chain: Pregnancy-associated glycoprotein 2 (376 aa).

The first 15 residues, 1–15 (MKWLVLLGLVALSEC), serve as a signal peptide directing secretion. N-linked (GlcNAc...) asparagine glycosylation is found at N51 and N71. The Peptidase A1 domain maps to 68–373 (YVGNITIGTP…DRKNRRIGLA (306 aa)). Residue D86 is part of the active site. C99 and C104 are oxidised to a cystine. N-linked (GlcNAc...) asparagine glycosylation is found at N114, N248, and N252. C258 and C262 are oxidised to a cystine. Residue D267 is part of the active site. Cysteines 300 and 333 form a disulfide. N343 carries an N-linked (GlcNAc...) asparagine glycan.

Belongs to the peptidase A1 family. Post-translationally, N-Glycosylated; the glycans terminate in either N-acetyl-galactosamine (GalNAc) or N-acetyllactosamine. Terminal GalNAc on Asn-linked glycans is greatly reduced prior to parturition while lactosamine-type N-glycans remain unaltered. In terms of tissue distribution, trophoblast and placental tissue. Localized to both the mononucleate and binucleate cells of the trophectoderm.

The protein resides in the secreted. It localises to the extracellular space. PAG2 or a processed derivative of this molecule might represent a factor that binds the LH receptor. The protein is Pregnancy-associated glycoprotein 2 (PAG2) of Bos taurus (Bovine).